Consider the following 1045-residue polypeptide: MDIS1-interacting receptor like kinase 2 (1045 aa).

The first 43 residues, 1-43 (MNKTNPERKISLTSFKERMACKEKPRDLQVLLIISIVLSCSFA), serve as a signal peptide directing secretion. Over 44-709 (VSATVEEANA…SKKSHKDRNL (666 aa)) the chain is Extracellular. N-linked (GlcNAc...) asparagine glycosylation is found at Asn63, Asn77, Asn99, and Asn119. LRR repeat units follow at residues 92–116 (LGSI…PFSS), 117–140 (LPNL…LWGR), 141–165 (FSKL…LGDL), 166–189 (SNLD…IGRL), 191–212 (KVTE…SFGN), 213–237 (LTKL…IGNL), 238–260 (PNLR…SFGN), 262–285 (KNVT…IGNM), 286–309 (TALD…LGNI), 311–333 (TLAV…LGEM), 334–356 (ESMI…SFGK), 357–381 (LTAL…IANS), 383–405 (ELTV…ICRG), 406–429 (GKLE…LRDC), 431–452 (SLIR…AFGV), 453–476 (YPTL…NWEQ), 477–501 (SQKL…IWNM), 502–525 (TQLS…ISNI), 527–549 (RISK…IRLL), 550–573 (TNLE…LNNL), 575–597 (RLYY…LTKL), 598–620 (SQLQ…QFRS), 621–644 (LQNL…SFKD), and 646–670 (LALT…AFRN). N-linked (GlcNAc...) asparagine glycosylation is found at Asn179 and Asn212. Asn249, Asn263, and Asn284 each carry an N-linked (GlcNAc...) asparagine glycan. N-linked (GlcNAc...) asparagine glycosylation occurs at Asn323. N-linked (GlcNAc...) asparagine glycans are attached at residues Asn380, Asn393, and Asn410. Asn487 and Asn500 each carry an N-linked (GlcNAc...) asparagine glycan. An N-linked (GlcNAc...) asparagine glycan is attached at Asn580. A glycan (N-linked (GlcNAc...) asparagine) is linked at Asn633. Asn687 carries N-linked (GlcNAc...) asparagine glycosylation. A helical transmembrane segment spans residues 710-730 (IIYILVPIIGAIIILSVCAGI). Topologically, residues 731–1045 (FICFRKRTKQ…TMLSISTAFS (315 aa)) are cytoplasmic. At Thr772 the chain carries Phosphothreonine. The region spanning 775 to 1045 (FDPKYLIGTG…TMLSISTAFS (271 aa)) is the Protein kinase domain. Residues 781 to 789 (IGTGGHGKV) and Lys802 contribute to the ATP site. Phosphotyrosine occurs at positions 853 and 892. Residue Asp905 is the Proton acceptor of the active site. A Phosphoserine modification is found at Ser938. Residues Tyr946 and Tyr953 each carry the phosphotyrosine modification.

The protein belongs to the protein kinase superfamily. Ser/Thr protein kinase family. Interacts with MDIS1 and LURE1.2. Binds to SCOOP12; this interaction triggers the formation of complex between MIK2 and the BAK1/SERK3 and SERK4 coreceptors. As to expression, expressed in pollen tubes. Highly expressed in shoots, roots and leaves.

The protein localises to the cell membrane. It carries out the reaction L-seryl-[protein] + ATP = O-phospho-L-seryl-[protein] + ADP + H(+). It catalyses the reaction L-threonyl-[protein] + ATP = O-phospho-L-threonyl-[protein] + ADP + H(+). Its function is as follows. Acts as a receptor of SCOOP peptides from Brassicaceae plants regulating multiple processing including plant growth, development and stress responses. Perception of SCOOP peptides induces the association of MIK2 with the coreceptors BAK1/SERK3 and SERK4 and relays the signaling through the activation of receptor-like cytosolic kinases (RLCKs) BIK1 and PBL1. Also able to detect SCOOP-like proteins (SCOOPL) present in fungal Fusarium spp. and bacterial Comamonadaceae to elicit various immune responses, including growth inhibition, ROS production, calcium Ca(2+) influx, MAPK activation and MYB51 promoter activation in roots, thus being required for resistance to several root pathogens. Involved in the pollen tube perception of the female signal. Required to trigger defense responses toward generalist herbivores such as Spodoptera littoralis, probably via the activation of jasmonate and indole glucosinolate biosynthesis. The polypeptide is MDIS1-interacting receptor like kinase 2 (Arabidopsis thaliana (Mouse-ear cress)).